A 65-amino-acid polypeptide reads, in one-letter code: Small ribosomal subunit protein bS21 (65 aa).

This sequence belongs to the bacterial ribosomal protein bS21 family.

The chain is Small ribosomal subunit protein bS21 from Geobacter sp. (strain M21).